A 494-amino-acid chain; its full sequence is Probable cytosol aminopeptidase (494 aa).

Mn(2+) is bound by residues lysine 264 and aspartate 269. Residue lysine 276 is part of the active site. Positions 287, 346, and 348 each coordinate Mn(2+). Residue arginine 350 is part of the active site.

Belongs to the peptidase M17 family. Requires Mn(2+) as cofactor.

Its subcellular location is the cytoplasm. The enzyme catalyses Release of an N-terminal amino acid, Xaa-|-Yaa-, in which Xaa is preferably Leu, but may be other amino acids including Pro although not Arg or Lys, and Yaa may be Pro. Amino acid amides and methyl esters are also readily hydrolyzed, but rates on arylamides are exceedingly low.. It carries out the reaction Release of an N-terminal amino acid, preferentially leucine, but not glutamic or aspartic acids.. Presumably involved in the processing and regular turnover of intracellular proteins. Catalyzes the removal of unsubstituted N-terminal amino acids from various peptides. The protein is Probable cytosol aminopeptidase (pepA) of Pasteurella multocida (strain Pm70).